Reading from the N-terminus, the 1803-residue chain is 6-methylsalicylic acid synthase (1803 aa).

The segment at 1-40 is disordered; that stretch reads MEVHGDEVLSVDSGVSTPPSTGSGFRRPLETPGTEIGNLN. Over residues 13-24 the composition is skewed to low complexity; the sequence is SGVSTPPSTGSG. The region spanning 44–470 is the Ketosynthase family 3 (KS3) domain; sequence QNEVAVVGMA…GTVSHAIIEE (427 aa). Residues C216, H351, and H391 each act as for beta-ketoacyl synthase activity in the active site. Residues 581–894 form the Malonyl-CoA:ACP transacylase (MAT) domain; that stretch reads VWVFSGHGAQ…SIAQLHCRGA (314 aa). Catalysis depends on S667, which acts as the For malonyltransferase activity. The segment at 940-1058 is N-terminal hotdog fold; it reads HTLLGQRVPV…GQWEAGGSKN (119 aa). Positions 940–1218 constitute a PKS/mFAS DH domain; the sequence is HTLLGQRVPV…FSEIEGTPGS (279 aa). H972 serves as the catalytic Proton acceptor; for thioesterase activity. Residues 1073–1218 are C-terminal hotdog fold; it reads ANNKLADNFS…FSEIEGTPGS (146 aa). D1129 acts as the Proton donor; for thioesterase activity in catalysis. Residues 1141 to 1262 are required for homotetramer formation; that stretch reads TSVGSTLFFD…KNVADLYCGS (122 aa). A Ketoreductase (KR) domain is found at 1434 to 1628; sequence STYLITGGLG…AVAVQWTSWR (195 aa). A compositionally biased stretch (low complexity) spans 1701–1710; it reads ASSADAPSAA. Residues 1701–1721 form a disordered region; the sequence is ASSADAPSAAPKETNEMPESI. One can recognise a Carrier domain in the interval 1726–1801; the sequence is TWLDERIRDC…HLVGWFLEKM (76 aa). S1761 is subject to O-(pantetheine 4'-phosphoryl)serine. The segment at 1783–1803 is required for catalytic activity; the sequence is LTWSCPTVSHLVGWFLEKMGN.

Homotetramer.

It catalyses the reaction 3 malonyl-CoA + acetyl-CoA + NADPH + 3 H(+) = 6-methylsalicylate + 3 CO2 + NADP(+) + 4 CoA + H2O. It functions in the pathway secondary metabolite biosynthesis. 6-methylsalicylic acid synthase; part of the gene cluster that mediates the biosynthesis of terreic acid, a quinone epoxide inhibitor of Bruton's tyrosine kinase. The first step of the pathway is the synthesis of 6-methylsalicylic acid (6-MSA) by the 6-methylsalicylic acid synthase atX. In the biosynthesis of 6-MSA, atX utilizes one acetyl-CoA and three malonyl-CoAs as its substrates and catalyzes a series of programmed reactions including Claisen condensation, reduction, aldol cyclization, and the hydrolytic cleavage that yields 6-MSA. The 6-methylsalicylate 1-monooxygenase atA then catalyzes the decarboxylative hydroxylation of 6-MSA to 3-methylcatechol. The next step is the conversion of 3-methylcatechol to 3-methyl-1,2,4-benzenetriol by cytochrome P450 monooxygenase atE, which is enhanced by cytochrome P450 monooxygenase atG. Then, the epoxidase atD catalyzes the epoxidation and hydroxyl oxidation of 3-methyl-1,2,4-benzenetriol to terremutin. Lastly, GMC oxidoreductase atC oxidizes terremutin to terreic acid. This Aspergillus terreus (strain NIH 2624 / FGSC A1156) protein is 6-methylsalicylic acid synthase.